The following is an 874-amino-acid chain: Putative disease resistance protein At5g05400 (874 aa).

The stretch at 22 to 74 (LSRNQNRFRNLVDHVAALKKTVRQLEARRDDLLKRIKVQEDRGLNLLDEVQQW) forms a coiled coil. Residues 139-434 (AQKGPIPKVE…GQGIILGSKG (296 aa)) form the NB-ARC domain. 182 to 189 (GMGGVGKT) contributes to the ATP binding site. 7 LRR repeats span residues 483–505 (QKNV…EDQK), 506–527 (AVRR…LHCP), 528–548 (KLET…EFLS), 552–574 (ILMV…SPLY), 575–597 (SLRF…YALR), 598–620 (NLLY…HDLP), and 621–642 (NLEV…VRQI).

This sequence belongs to the disease resistance NB-LRR family.

Potential disease resistance protein. The protein is Putative disease resistance protein At5g05400 of Arabidopsis thaliana (Mouse-ear cress).